The following is a 67-amino-acid chain: Large ribosomal subunit protein bL35 (67 aa).

Belongs to the bacterial ribosomal protein bL35 family.

The sequence is that of Large ribosomal subunit protein bL35 from Leptothrix cholodnii (strain ATCC 51168 / LMG 8142 / SP-6) (Leptothrix discophora (strain SP-6)).